The sequence spans 273 residues: Shikimate dehydrogenase (NADP(+)) (273 aa).

Shikimate is bound by residues 14-16 and T61; that span reads SKS. K65 (proton acceptor) is an active-site residue. Residue D77 participates in NADP(+) binding. Positions 86 and 102 each coordinate shikimate. NADP(+) is bound by residues 126–130, 150–155, and M213; these read GAGGA and NRTYEK. Y215 provides a ligand contact to shikimate. G237 provides a ligand contact to NADP(+).

Belongs to the shikimate dehydrogenase family. In terms of assembly, homodimer.

It catalyses the reaction shikimate + NADP(+) = 3-dehydroshikimate + NADPH + H(+). Its pathway is metabolic intermediate biosynthesis; chorismate biosynthesis; chorismate from D-erythrose 4-phosphate and phosphoenolpyruvate: step 4/7. Functionally, involved in the biosynthesis of the chorismate, which leads to the biosynthesis of aromatic amino acids. Catalyzes the reversible NADPH linked reduction of 3-dehydroshikimate (DHSA) to yield shikimate (SA). This Aliivibrio salmonicida (strain LFI1238) (Vibrio salmonicida (strain LFI1238)) protein is Shikimate dehydrogenase (NADP(+)).